The chain runs to 615 residues: Protein translocase subunit SecD (615 aa).

Helical transmembrane passes span 10–30, 452–472, 477–497, 504–524, 548–570, and 585–605; these read YVMLIVVIVIGLLYALPNLFG, QGLEACLAGLLVSILFMIIFY, LIATSALIANLILIVGIMSLL, MPGIAGIVLTLAVAVDANVLI, GAFSSIFDANITTLIKVIILYAV, and GVATSMFTAIVGTRAIVNLLY.

It belongs to the SecD/SecF family. SecD subfamily. Forms a complex with SecF. Part of the essential Sec protein translocation apparatus which comprises SecA, SecYEG and auxiliary proteins SecDF-YajC and YidC.

Its subcellular location is the cell inner membrane. Its function is as follows. Part of the Sec protein translocase complex. Interacts with the SecYEG preprotein conducting channel. SecDF uses the proton motive force (PMF) to complete protein translocation after the ATP-dependent function of SecA. In Shigella flexneri, this protein is Protein translocase subunit SecD.